The chain runs to 239 residues: Ribosomal RNA small subunit methyltransferase G (239 aa).

S-adenosyl-L-methionine-binding positions include Gly78, Phe83, 129–130 (AE), and Arg148.

It belongs to the methyltransferase superfamily. RNA methyltransferase RsmG family.

The protein localises to the cytoplasm. In terms of biological role, specifically methylates the N7 position of a guanine in 16S rRNA. This Clostridium botulinum (strain Kyoto / Type A2) protein is Ribosomal RNA small subunit methyltransferase G.